Consider the following 368-residue polypeptide: Lipoyl synthase, chloroplastic (368 aa).

Disordered regions lie at residues 1–30 (MQSSLARPLRPPVLAGCGGRRGHGAPRGSV) and 42–61 (PTVGTASRAPAGPYTGRDPE). The [4Fe-4S] cluster site is built by Cys94, Cys99, Cys105, Cys131, Cys135, Cys138, and Ser346. In terms of domain architecture, Radical SAM core spans 114 to 335 (GEGDGIATAT…KEYGESVGFR (222 aa)).

The protein belongs to the radical SAM superfamily. Lipoyl synthase family. The cofactor is [4Fe-4S] cluster.

Its subcellular location is the plastid. It localises to the chloroplast. It carries out the reaction [[Fe-S] cluster scaffold protein carrying a second [4Fe-4S](2+) cluster] + N(6)-octanoyl-L-lysyl-[protein] + 2 oxidized [2Fe-2S]-[ferredoxin] + 2 S-adenosyl-L-methionine + 4 H(+) = [[Fe-S] cluster scaffold protein] + N(6)-[(R)-dihydrolipoyl]-L-lysyl-[protein] + 4 Fe(3+) + 2 hydrogen sulfide + 2 5'-deoxyadenosine + 2 L-methionine + 2 reduced [2Fe-2S]-[ferredoxin]. Its pathway is protein modification; protein lipoylation via endogenous pathway; protein N(6)-(lipoyl)lysine from octanoyl-[acyl-carrier-protein]: step 2/2. Functionally, catalyzes the radical-mediated insertion of two sulfur atoms into the C-6 and C-8 positions of the octanoyl moiety bound to the lipoyl domains of lipoate-dependent enzymes, thereby converting the octanoylated domains into lipoylated derivatives. The protein is Lipoyl synthase, chloroplastic of Sorghum bicolor (Sorghum).